Here is a 739-residue protein sequence, read N- to C-terminus: Sulfate transporter (739 aa).

2 stretches are compositionally biased toward basic and acidic residues: residues 1–17 (MSSE…RDLP) and 31–46 (TQRR…ETGH). The disordered stretch occupies residues 1-47 (MSSENKEQHDLSPRDLPEEAFGFPSELPLETQRRSGTDLRQSETGHG). At Ser12 the chain carries Phosphoserine. 2 helical membrane-spanning segments follow: residues 112–132 (VMSG…YSLL) and 137–157 (PIYG…FGTS). An N-linked (GlcNAc...) asparagine glycan is attached at Asn205. 2 consecutive transmembrane segments (helical) span residues 227–247 (FMAG…VSVY) and 255–275 (GFVT…LLGL). Asn357 carries an N-linked (GlcNAc...) asparagine glycan. 4 helical membrane-spanning segments follow: residues 378–398 (LIPN…AITV), 420–440 (AIGF…SAAL), 455–475 (LSAI…APLF), and 524–544 (LLST…CVIL). Residues 568 to 719 (TYKNLRSKSG…YSLSEAVAFA (152 aa)) form the STAS domain.

Belongs to the SLC26A/SulP transporter (TC 2.A.53) family. In terms of processing, N-glycosylated. As to expression, distributed mainly in the thymus, testis and osteoblastic cells. Highly expressed in the bone, cartilage, kidney and colon.

Its subcellular location is the cell membrane. It is found in the apical cell membrane. The catalysed reaction is oxalate(in) + sulfate(out) = oxalate(out) + sulfate(in). The enzyme catalyses sulfate(out) + 2 chloride(in) = sulfate(in) + 2 chloride(out). It carries out the reaction oxalate(out) + 2 chloride(in) = oxalate(in) + 2 chloride(out). It catalyses the reaction bromide(in) + chloride(out) = bromide(out) + chloride(in). The catalysed reaction is nitrate(in) + chloride(out) = nitrate(out) + chloride(in). The enzyme catalyses iodide(in) + chloride(out) = iodide(out) + chloride(in). Sulfate transporter which mediates sulfate uptake into chondrocytes in order to maintain adequate sulfation of proteoglycans which is needed for cartilage development. Mediates electroneutral anion exchange of sulfate ions for oxalate ions, sulfate and oxalate ions for chloride and/or hydroxyl ions and chloride ions for bromide, iodide and nitrate ions. The coupling of sulfate transport to both hydroxyl and chloride ions likely serves to ensure transport at both acidic pH when most sulfate uptake is mediated by sulfate-hydroxide exchange and alkaline pH when most sulfate uptake is mediated by sulfate-chloride exchange. Essential for chondrocyte proliferation, differentiation and cell size expansion. This chain is Sulfate transporter (Slc26a2), found in Mus musculus (Mouse).